We begin with the raw amino-acid sequence, 440 residues long: Adenylosuccinate synthetase (440 aa).

Residues 11–17 and 39–41 each bind GTP; these read GDEGKGG and GHT. The active-site Proton acceptor is the Asp12. Mg(2+)-binding residues include Asp12 and Gly39. IMP-binding positions include 12–15, 37–40, Thr127, Arg141, Gln230, Thr245, and Arg311; these read DEGK and NAGH. His40 acts as the Proton donor in catalysis. Position 307–313 (307–313) interacts with substrate; that stretch reads TVTGRPR. GTP-binding positions include Arg313, 339–341, and 424–426; these read HLD and GVG.

Belongs to the adenylosuccinate synthetase family. In terms of assembly, homodimer. The cofactor is Mg(2+).

It is found in the cytoplasm. The enzyme catalyses IMP + L-aspartate + GTP = N(6)-(1,2-dicarboxyethyl)-AMP + GDP + phosphate + 2 H(+). It functions in the pathway purine metabolism; AMP biosynthesis via de novo pathway; AMP from IMP: step 1/2. In terms of biological role, plays an important role in the de novo pathway of purine nucleotide biosynthesis. Catalyzes the first committed step in the biosynthesis of AMP from IMP. This chain is Adenylosuccinate synthetase, found in Halobacterium salinarum (strain ATCC 29341 / DSM 671 / R1).